Consider the following 394-residue polypeptide: Elongation factor Tu (394 aa).

A tr-type G domain is found at 10-204; sequence KPHVNVGTIG…ALDSYIPEPQ (195 aa). A G1 region spans residues 19–26; the sequence is GHVDHGKT. 19 to 26 contacts GTP; sequence GHVDHGKT. Thr26 lines the Mg(2+) pocket. Positions 60–64 are G2; that stretch reads GITIN. Residues 81–84 form a G3 region; that stretch reads DCPG. GTP contacts are provided by residues 81-85 and 136-139; these read DCPGH and NKCD. The G4 stretch occupies residues 136–139; the sequence is NKCD. The segment at 174–176 is G5; that stretch reads SAL.

Belongs to the TRAFAC class translation factor GTPase superfamily. Classic translation factor GTPase family. EF-Tu/EF-1A subfamily. As to quaternary structure, monomer.

It is found in the cytoplasm. It carries out the reaction GTP + H2O = GDP + phosphate + H(+). In terms of biological role, GTP hydrolase that promotes the GTP-dependent binding of aminoacyl-tRNA to the A-site of ribosomes during protein biosynthesis. This chain is Elongation factor Tu, found in Shewanella baltica (strain OS185).